The primary structure comprises 261 residues: Indole-3-glycerol phosphate synthase (261 aa).

Belongs to the TrpC family.

The catalysed reaction is 1-(2-carboxyphenylamino)-1-deoxy-D-ribulose 5-phosphate + H(+) = (1S,2R)-1-C-(indol-3-yl)glycerol 3-phosphate + CO2 + H2O. It functions in the pathway amino-acid biosynthesis; L-tryptophan biosynthesis; L-tryptophan from chorismate: step 4/5. The sequence is that of Indole-3-glycerol phosphate synthase from Burkholderia cenocepacia (strain HI2424).